The primary structure comprises 195 residues: GTP-dependent dephospho-CoA kinase (195 aa).

GTP-binding residues include aspartate 49, valine 50, aspartate 68, glutamate 127, and aspartate 150.

It belongs to the GTP-dependent DPCK family.

It catalyses the reaction 3'-dephospho-CoA + GTP = GDP + CoA + H(+). It participates in cofactor biosynthesis; coenzyme A biosynthesis. Its function is as follows. Catalyzes the GTP-dependent phosphorylation of the 3'-hydroxyl group of dephosphocoenzyme A to form coenzyme A (CoA). The protein is GTP-dependent dephospho-CoA kinase of Methanosarcina barkeri (strain Fusaro / DSM 804).